We begin with the raw amino-acid sequence, 284 residues long: MKIKEIKKVTLQPFTKWTGGKRQLLPVIRELIPKTYNRYFEPFVGGGALFFDLAPKDAVINDFNAELINCYQQIKDNPQELIEILKVHQEYNSKEYYLDLRSADRDERIDMMSEVQRAARILYMLRVNFNGLYRVNSKNQFNVPYGRYKNPKIVDEELISAISVYINNNQLEIKVGDFEKAIVDVRTGDFVYFDPPYIPLSETSAFTSYTHEGFSFADQVRLRDAFKRLSDTGAYVMLSNSSSALVEELYKDFNIHYVEATRTNGAKSSSRGKISEIIVTNYEK.

W17, K21, G46, D62, D177, F178, and D194 together coordinate S-adenosyl-L-methionine.

The protein belongs to the N(4)/N(6)-methyltransferase family. In terms of assembly, monomer. Homodimer.

It carries out the reaction a 2'-deoxyadenosine in DNA + S-adenosyl-L-methionine = an N(6)-methyl-2'-deoxyadenosine in DNA + S-adenosyl-L-homocysteine + H(+). Functionally, an alpha subtype methylase that recognizes the double-stranded sequence 5'-GATC-3', methylates A-2 on both strands, and protects the DNA from cleavage by the DpnII endonuclease. This is Type II methyltransferase M1.DpnII from Streptococcus pneumoniae.